We begin with the raw amino-acid sequence, 55 residues long: Hydrophobic protein LTI6B (55 aa).

2 consecutive transmembrane segments (helical) span residues 8–28 (IDILIAIILPPLGVFLKFGCG) and 31–51 (FWICLLLTFLGYIPGIIYAIY).

This sequence belongs to the UPF0057 (PMP3) family.

The protein localises to the membrane. Its function is as follows. Plays a role in the regulation of membrane potential. Could mediate a proton leak. This chain is Hydrophobic protein LTI6B (LTI6B), found in Oryza sativa subsp. indica (Rice).